The sequence spans 501 residues: ATP-dependent rRNA helicase RRP3 (501 aa).

Residues 3 to 44 adopt a coiled-coil conformation; that stretch reads KIVKRKEKKANDELTSLAEKIRAKALENQKKLIEAEKEGGSE. The interval 36–79 is disordered; the sequence is EAEKEGGSESDSEEDATAEKKKVLKSKSKSTVSTQNENTNEDES. Phosphoserine is present on residues serine 43, serine 45, and serine 47. A Q motif motif is present at residues 81–109; it reads ESFSELNLVPELIQACKNLNYSKPTPIQS. The Helicase ATP-binding domain maps to 112 to 284; the sequence is IPPALEGHDI…RASLTNPVKC (173 aa). 125–132 serves as a coordination point for ATP; the sequence is AQTGSGKT. The DEAD box motif lies at 231 to 234; it reads DEAD. The Helicase C-terminal domain maps to 307–461; sequence LKNTYLIYLL…NIILTLRDSV (155 aa). A disordered region spans residues 480-501; it reads IARGKGRRGRMMTRENMDMGER. The span at 491 to 501 shows a compositional bias: basic and acidic residues; the sequence is MTRENMDMGER.

It belongs to the DEAD box helicase family. DDX47/RRP3 subfamily. As to quaternary structure, interacts with the SSU processome.

Its subcellular location is the nucleus. The catalysed reaction is ATP + H2O = ADP + phosphate + H(+). Functionally, ATP-dependent rRNA helicase required for pre-ribosomal RNA processing. Involved in the maturation of the 35S-pre-rRNA and to its cleavage to mature 18S rRNA. This Saccharomyces cerevisiae (strain YJM789) (Baker's yeast) protein is ATP-dependent rRNA helicase RRP3.